The following is a 121-amino-acid chain: NAD(P)H-quinone oxidoreductase subunit M (121 aa).

Belongs to the complex I NdhM subunit family. In terms of assembly, NDH-1 can be composed of about 15 different subunits; different subcomplexes with different compositions have been identified which probably have different functions.

Its subcellular location is the cellular thylakoid membrane. It catalyses the reaction a plastoquinone + NADH + (n+1) H(+)(in) = a plastoquinol + NAD(+) + n H(+)(out). It carries out the reaction a plastoquinone + NADPH + (n+1) H(+)(in) = a plastoquinol + NADP(+) + n H(+)(out). NDH-1 shuttles electrons from an unknown electron donor, via FMN and iron-sulfur (Fe-S) centers, to quinones in the respiratory and/or the photosynthetic chain. The immediate electron acceptor for the enzyme in this species is believed to be plastoquinone. Couples the redox reaction to proton translocation, and thus conserves the redox energy in a proton gradient. Cyanobacterial NDH-1 also plays a role in inorganic carbon-concentration. This chain is NAD(P)H-quinone oxidoreductase subunit M, found in Synechococcus sp. (strain JA-2-3B'a(2-13)) (Cyanobacteria bacterium Yellowstone B-Prime).